The primary structure comprises 325 residues: Heme A synthase (325 aa).

The next 5 membrane-spanning stretches (helical) occupy residues 6–26 (WLAV…FTRL), 88–108 (LVGR…FVVG), 116–136 (LRLC…WYMV), 155–175 (LFCA…PTVI), and 184–204 (LVGC…GLVA). His246 is a heme binding site. Transmembrane regions (helical) follow at residues 248–268 (MSAF…FFYD), 275–295 (VFLV…TLLF), and 297–317 (IPID…GICV). His305 contributes to the heme binding site.

This sequence belongs to the COX15/CtaA family. Type 2 subfamily. As to quaternary structure, interacts with CtaB. The cofactor is heme b.

It localises to the cell membrane. The enzyme catalyses Fe(II)-heme o + 2 A + H2O = Fe(II)-heme a + 2 AH2. The protein operates within porphyrin-containing compound metabolism; heme A biosynthesis; heme A from heme O: step 1/1. In terms of biological role, catalyzes the conversion of heme O to heme A by two successive hydroxylations of the methyl group at C8. The first hydroxylation forms heme I, the second hydroxylation results in an unstable dihydroxymethyl group, which spontaneously dehydrates, resulting in the formyl group of heme A. The protein is Heme A synthase of Neorickettsia sennetsu (strain ATCC VR-367 / Miyayama) (Ehrlichia sennetsu).